A 345-amino-acid chain; its full sequence is Very-long-chain 3-oxoacyl-CoA reductase (345 aa).

Residues 26-46 (GAAVLLATGGLFLASRVLTFV) traverse the membrane as a helical segment. NADP(+) contacts are provided by V71, D125, D133, N152, Y219, K223, I252, and S254. Y219 acts as the Proton donor in catalysis. The active-site Lowers pKa of active site Tyr is the K223.

This sequence belongs to the short-chain dehydrogenases/reductases (SDR) family.

The protein localises to the endoplasmic reticulum membrane. The catalysed reaction is a very-long-chain (3R)-3-hydroxyacyl-CoA + NADP(+) = a very-long-chain 3-oxoacyl-CoA + NADPH + H(+). The protein operates within lipid metabolism; fatty acid biosynthesis. Its function is as follows. Component of the microsomal membrane bound fatty acid elongation system, which produces the 26-carbon very long-chain fatty acids (VLCFA) from palmitate. Catalyzes the reduction of the 3-ketoacyl-CoA intermediate that is formed in each cycle of fatty acid elongation. VLCFAs serve as precursors for ceramide and sphingolipids. This is Very-long-chain 3-oxoacyl-CoA reductase from Aspergillus clavatus (strain ATCC 1007 / CBS 513.65 / DSM 816 / NCTC 3887 / NRRL 1 / QM 1276 / 107).